We begin with the raw amino-acid sequence, 224 residues long: uncharacterized protein (224 aa).

A run of 4 helical transmembrane segments spans residues 39–59 (LICL…FYSI), 70–90 (YLSL…ILFA), 103–123 (VFVF…IGAI), and 139–159 (MHIG…FLIT).

The protein resides in the membrane. This is an uncharacterized protein from Dictyostelium discoideum (Social amoeba).